The chain runs to 268 residues: Ubiquinone biosynthesis protein COQ4 homolog, mitochondrial (268 aa).

Residues His171, Asp172, His175, and Glu187 each contribute to the Zn(2+) site.

The protein belongs to the COQ4 family. In terms of assembly, component of a multi-subunit COQ enzyme complex. It depends on Zn(2+) as a cofactor.

Its subcellular location is the mitochondrion inner membrane. It carries out the reaction a 4-hydroxy-3-methoxy-5-(all-trans-polyprenyl)benzoate + H(+) = a 2-methoxy-6-(all-trans-polyprenyl)phenol + CO2. Its pathway is cofactor biosynthesis; ubiquinone biosynthesis. Functionally, lyase that catalyzes the C1-decarboxylation of 4-hydroxy-3-methoxy-5-(all-trans-polyprenyl)benzoic acid into 2-methoxy-6-(all-trans-polyprenyl)phenol during ubiquinone biosynthesis. This Drosophila sechellia (Fruit fly) protein is Ubiquinone biosynthesis protein COQ4 homolog, mitochondrial.